Here is a 105-residue protein sequence, read N- to C-terminus: Small ribosomal subunit protein uS10 (105 aa).

The protein belongs to the universal ribosomal protein uS10 family. As to quaternary structure, part of the 30S ribosomal subunit.

Its function is as follows. Involved in the binding of tRNA to the ribosomes. In Rickettsia rickettsii (strain Iowa), this protein is Small ribosomal subunit protein uS10.